A 317-amino-acid chain; its full sequence is MRSSRSAKVSLVGAGNIGGALAHMLGASQVVKELVLVDVAGGMTEGKVLDVGQALALLGSDVYITGGSDYAAIEHSDAVVVTAGIPRKEGMSREDLLNTNAAVVRNIAENIAKYSPGALVIVVTNPLDAMVWCMYKYSGLPANRVVGMAGVLDSARFSFFLARHMNVSVSSVSAMVLGGHGDLMLPLLRYSTVGGVPVESLIESGRLNRGDIAAIVERTRKGGEEIVKLLKTGSAYCAPAASCAHMLESYVRDKRSIMPCSAYLDGQYGVRDLFVGVPVIIGEKGVEEVVEFPLTAEEQAVFDQSVELIRGSVSAIS.

NAD(+)-binding positions include 13–18 (GAGNIG) and Asp-38. Residues Arg-87 and Arg-93 each contribute to the substrate site. NAD(+) is bound by residues Asn-100 and 123–125 (VTN). Residues Asn-125 and Arg-156 each coordinate substrate. His-180 acts as the Proton acceptor in catalysis.

Belongs to the LDH/MDH superfamily. MDH type 3 family.

It catalyses the reaction (S)-malate + NAD(+) = oxaloacetate + NADH + H(+). Its function is as follows. Catalyzes the reversible oxidation of malate to oxaloacetate. This chain is Malate dehydrogenase, found in Anaplasma marginale (strain Florida).